The primary structure comprises 561 residues: Mesoderm induction early response protein 2 (561 aa).

2 disordered regions span residues 1–28 (MAEA…GEPN) and 52–188 (QNYG…EDPL). Position 11 is a phosphoserine (Ser11). A compositionally biased stretch (polar residues) spans 140 to 165 (QSSADDLTPSVTSHEASDLFPSQSGS). The ELM2 domain maps to 195 to 292 (KEIMVGPQFQ…EALRRLRFNV (98 aa)). The region spanning 297–349 (DGLCAWSEEERRNFEHGFRVHGKNFHLIQANKVRTRSVGECVEYYYLWKKSER) is the SANT domain. The interval 360–515 (GRRKYGPSGN…DGEPEETVGP (156 aa)) is disordered. The segment covering 417–428 (LSMGSSMSRSLG) has biased composition (low complexity). Positions 439–451 (SSEPGPRLFPPLD) are enriched in pro residues. The span at 453 to 482 (PSALPSSRRPPALAEPAFFPPATAAPEPGA) shows a compositional bias: low complexity.

In terms of assembly, part of a complex containing at least CDYL, MIER1, MIER2, HDAC1 and HDAC2.

Its subcellular location is the nucleus. In terms of biological role, transcriptional repressor. The protein is Mesoderm induction early response protein 2 (MIER2) of Bos taurus (Bovine).